Here is a 240-residue protein sequence, read N- to C-terminus: MALEKSLETGDGQEKVRKQTAVYVYEAPLRLWHWVTALSIVVLGVTGYFIGAPLPTMPGEAMDNYLMGYIRFAHFAAGYVLAIGFLGRVYWAFVGNHHARELFLVPVHRKAWWKELWHEVRWYLFLEKVPKKYIGHNPLGQLAMFCFFVIGAVFMSVTGFALYAEGLGQGSWADRLFGWVIPLFGQSQDVHTWHHLGMWYLVVFVMIHVYLAAREDIVSRQSLISTMVGGWRMFKDDRPD.

A run of 4 helical transmembrane segments spans residues 31-51 (LWHW…YFIG), 75-95 (FAAG…AFVG), 142-163 (LAMF…FALY), and 196-213 (LGMW…YLAA).

This sequence belongs to the HupC/HyaC/HydC family.

The protein localises to the cell membrane. In terms of biological role, probable b-type cytochrome. This chain is Probable Ni/Fe-hydrogenase B-type cytochrome subunit (hupZ), found in Azotobacter chroococcum mcd 1.